The following is a 534-amino-acid chain: UDP-glucuronosyltransferase 1A4 (534 aa).

An N-terminal signal peptide occupies residues 1 to 28 (MARGLQVPLPRLATGLLLLLSVQPWAES). Residues asparagine 119, asparagine 142, asparagine 296, and asparagine 348 are each glycosylated (N-linked (GlcNAc...) asparagine). A helical transmembrane segment spans residues 492–508 (VIGFLLAVVLTVAFITF).

Belongs to the UDP-glycosyltransferase family. Homodimer. Homooligomer. Interacts with UGT1A1, UGT1A3, UGT1A6, UGT1A7, UGT1A8, UGT1A9 and UGT1A10 to form heterodimers. Isoform 1 interacts with isoform 2/i2 suggesting that oligomerization is involved in negative regulation of transferase activity by isoform 2. Isoform 1 also interacts with respective i2 isoforms of UGT1A1, UGT1A3, UGT1A6, UGT1A7, UGT1A8, UGT1A9 and UGT1A10. As to expression, expressed in liver. Expressed in kidney, colon and small intestine. Not expressed in esophagus. Not expressed in skin. In terms of tissue distribution, expressed in liver, kidney, colon, esophagus and small intestine.

The protein resides in the endoplasmic reticulum membrane. The enzyme catalyses glucuronate acceptor + UDP-alpha-D-glucuronate = acceptor beta-D-glucuronoside + UDP + H(+). It catalyses the reaction calcidiol + UDP-alpha-D-glucuronate = calcidiol 25-O-(beta-D-glucuronide) + UDP + H(+). The catalysed reaction is calcidiol + UDP-alpha-D-glucuronate = calcidiol 3-O-(beta-D-glucuronide) + UDP + H(+). It carries out the reaction calcitriol + UDP-alpha-D-glucuronate = calcitriol 25-O-(beta-D-glucuronide) + UDP + H(+). The enzyme catalyses (5Z,8Z,11Z,14Z)-eicosatetraenoate + UDP-alpha-D-glucuronate = O-[(5Z),(8Z),(11Z),(14Z)-eicosatetraenoyl]-beta-D-glucuronate + UDP. It catalyses the reaction 15-hydroxy-(5Z,8Z,11Z,13E)-eicosatetraenoate + UDP-alpha-D-glucuronate = 15-O-(beta-D-glucuronosyl)-(5Z,8Z,11Z,14Z)-eicosatetraenoate + UDP + H(+). The catalysed reaction is 20-hydroxy-(5Z,8Z,11Z,14Z)-eicosatetraenoate + UDP-alpha-D-glucuronate = 20-O-(beta-D-glucuronosyl)-(5Z,8Z,11Z,14Z)-eicosatetraenoate + UDP + H(+). In terms of biological role, UDP-glucuronosyltransferase (UGT) that catalyzes phase II biotransformation reactions in which lipophilic substrates are conjugated with glucuronic acid to increase the metabolite's water solubility, thereby facilitating excretion into either the urine or bile. Essential for the elimination and detoxification of drugs, xenobiotics and endogenous compounds. Involved in the glucuronidation of calcidiol, which is the major circulating form of vitamin D3 essential for the regulation of calcium and phosphate homeostasis. Also glucuronidates the biologically active form of vitamin D3, calcitriol, probably leading to its biliary transport and intestinal reabsorption. Involved in the glucuronidation of arachidonic acid (AA) and AA-derived eicosanoids including 15-HETE, 20-HETE and PGB1. Its function is as follows. Lacks UDP-glucuronosyltransferase (UGT) activity but acts as a negative regulator of isoform 1. In Homo sapiens (Human), this protein is UDP-glucuronosyltransferase 1A4.